The chain runs to 412 residues: Pentatricopeptide repeat-containing protein At3g60980, mitochondrial (412 aa).

The transit peptide at 1–18 (MSLIGRLNLGRRFCTAVP) directs the protein to the mitochondrion. PPR repeat units lie at residues 69 to 104 (TTTICQSIIGGMLRDKRLKDAYDLYEFFFNQHNLRP), 105 to 139 (NSHCWNYIIESGFQQGLVNDALHFHHRCINSGQVH), 143 to 178 (SDDSFRILTKGLVHSGRLDQAEAFLRGRTVNRTTYP), 179 to 213 (DHVAYNNLIRGFLDLGNFKKANLVLGEFKRLFLIA), 230 to 264 (VAFLMATFMEYWFKQGKQVEAMECYNRCVLSNRLL), 266 to 296 (CAETGNALLKVLLKYGEKKNAWALYHELLDK), 305 to 339 (DSDTIKIMVDECFDMGWFSEAMETYKKARPKNDYL), 344 to 371 (IITRFCENRMLSEAESVFVDSLADDFGY), and 373 to 407 (DVNTYKTMIDAYVKAGRIHDAIKTSNKMIDATLKE).

This sequence belongs to the PPR family. P subfamily.

The protein localises to the mitochondrion. In Arabidopsis thaliana (Mouse-ear cress), this protein is Pentatricopeptide repeat-containing protein At3g60980, mitochondrial.